The chain runs to 99 residues: uncharacterized protein (99 aa).

This is an uncharacterized protein from Thermoproteus tenax virus 1 (strain KRA1) (TTV1).